The primary structure comprises 300 residues: Taste receptor type 2 member 105 (300 aa).

Residues 1 to 7 (MLSAAEG) lie on the Extracellular side of the membrane. The helical transmembrane segment at 8 to 28 (ILLSIATVEAGLGVLGNTFIA) threads the bilayer. Residues 29–43 (LVNCMDWAKNNKLSM) lie on the Cytoplasmic side of the membrane. The chain crosses the membrane as a helical span at residues 44–64 (TGFLLIGLATSRIFIVWLLTL). The Extracellular portion of the chain corresponds to 65–87 (DAYAKLFYPSKYFSSSLIEIISY). The chain crosses the membrane as a helical span at residues 88–108 (IWMTVNHLTVWFATSLSIFYF). At 109-128 (LKIANFSDCVFLWLKRRTDK) the chain is on the cytoplasmic side. The helical transmembrane segment at 129–149 (AFVFLLGCLLTSWVISFSFVV) threads the bilayer. Over 150–181 (KVMKDGKVNHRNRTSEMYWEKRQFTINYVFLN) the chain is Extracellular. N-linked (GlcNAc...) asparagine glycosylation is present at N161. The helical transmembrane segment at 182 to 202 (IGVISLFMMTLTACFLLIMSL) threads the bilayer. The Cytoplasmic segment spans residues 203-233 (WRHSRQMQSGVSGFRDLNTEAHVKAIKFLIS). A helical transmembrane segment spans residues 234–254 (FIILFVLYFIGVSIEIICIFI). The Extracellular segment spans residues 255 to 259 (PENKL). The chain crosses the membrane as a helical span at residues 260–280 (LFIFGFTTASIYPCCHSFILI). Over 281–300 (LSNSQLKQAFVKVLQGLKFF) the chain is Cytoplasmic.

It belongs to the G-protein coupled receptor T2R family. As to expression, expressed in subsets of taste receptor cells of the tongue and palate epithelium and exclusively in gustducin-positive cells. Expressed in gastric and duodenal tissues.

It localises to the membrane. In terms of biological role, gustducin-coupled cycloheximide receptor implicated in the perception of bitter compounds in the oral cavity and the gastrointestinal tract. Signals through PLCB2 and the calcium-regulated cation channel TRPM5. The protein is Taste receptor type 2 member 105 (Tas2r105) of Mus musculus (Mouse).